The primary structure comprises 671 residues: Putative protein kinase C delta type homolog (671 aa).

Residues 1 to 136 (MMFTRAQVRK…ITNRRGAIKH (136 aa)) are disordered. Over residues 14 to 27 (SNSSSQRPRSSGGS) the composition is skewed to low complexity. Residues 57–101 (ARRDQYRDRDHYGKHSFELPRQHSKEEAYHRDRESSAGGVDRGER) are compositionally biased toward basic and acidic residues. The segment covering 102 to 116 (SGIGGNGGGVTGGGV) has biased composition (gly residues). 2 consecutive Phorbol-ester/DAG-type zinc fingers follow at residues 144 to 194 (GHRF…LGKC) and 216 to 266 (PHRF…ANLC). The 259-residue stretch at 343-601 (FHFLAVLGKG…AGDIADHIFF (259 aa)) folds into the Protein kinase domain. ATP contacts are provided by residues 349–357 (LGKGSFGKV) and Lys372. Asp467 serves as the catalytic Proton acceptor. The region spanning 602-671 (RPIDWGLLEK…TYTNPHITLD (70 aa)) is the AGC-kinase C-terminal domain.

It belongs to the protein kinase superfamily. AGC Ser/Thr protein kinase family. PKC subfamily.

It carries out the reaction L-seryl-[protein] + ATP = O-phospho-L-seryl-[protein] + ADP + H(+). The enzyme catalyses L-threonyl-[protein] + ATP = O-phospho-L-threonyl-[protein] + ADP + H(+). In Drosophila melanogaster (Fruit fly), this protein is Putative protein kinase C delta type homolog.